The following is a 166-amino-acid chain: Probable calcium-binding protein CML17 (166 aa).

EF-hand domains follow at residues Glu-12–Lys-47, Pro-48–Ser-83, Tyr-91–Ala-126, and Leu-127–Asp-162. Ca(2+)-binding residues include Asp-25, Asn-27, Asp-29, Ser-31, and Glu-36. The Ca(2+) site is built by Asp-104, Asp-106, Asn-108, Glu-115, Asp-140, Asp-142, Asp-144, Arg-146, and Glu-151.

Potential calcium sensor. The chain is Probable calcium-binding protein CML17 (CML17) from Arabidopsis thaliana (Mouse-ear cress).